A 313-amino-acid polypeptide reads, in one-letter code: Short-chain dehydrogenase/reductase family 9C member 7 (313 aa).

29-53 provides a ligand contact to NADP(+); sequence FITGCDSGFGNLLAKQLVDRGMQVL. Residue serine 160 coordinates substrate. The Proton acceptor role is filled by tyrosine 172. Serine 185 is subject to Phosphoserine.

This sequence belongs to the short-chain dehydrogenases/reductases (SDR) family. In terms of tissue distribution, expressed in the skin. Expressed in granular and cornified layers of the epidermis (at protein level). Highly expressed in liver.

Its subcellular location is the cytoplasm. The catalysed reaction is a N-[omega-(9R,10R)-epoxy-(13R)-hydroxy-(11E)-octadecenoyloxy]acyl-beta-D-glucosyl-(1&lt;-&gt;1)-sphing-4E-enine + NAD(+) = a N-[omega-(9R,10R)-epoxy-13-oxo-(11E)-octadecenoyloxy]acyl-beta-D-glucosyl-(1&lt;-&gt;1)-sphing-4E-enine + NADH + H(+). The enzyme catalyses a N-[omega-(9R,10R)-epoxy-(13R)-hydroxy-(11E)-octadecenoyloxy]-acylsphing-4E-enine + NAD(+) = a N-[omega-(9R,10R)-epoxy-13-oxo-(11E)-octadecenoyloxy]-acylsphing-4E-enine + NADH + H(+). Its function is as follows. Plays a crucial role in the formation of the epidermal permeability barrier. Catalyzes the NAD+-dependent dehydrogenation of the linoleate 9,10-trans-epoxy-11E-13-alcohol esterified in omega-O-acylceramides (such as in N-[omega-(9R,10R)-epoxy-(13R)-hydroxy-(11E)-octadecenoyloxy]-acylsphing-4E-enine) to the corresponding 13-ketone, the reactive moiety required for binding of epidermal ceramides to proteins. Displays weak conversion of all-trans-retinal to all-trans-retinol in the presence of NADH. Has apparently no steroid dehydrogenase activity. This is Short-chain dehydrogenase/reductase family 9C member 7 (SDR9C7) from Homo sapiens (Human).